The sequence spans 630 residues: Putative adenylate cyclase regulatory protein (630 aa).

The segment at 10–46 (CAVCREPWAEGALELFPCRHVFCTVCVVERWRCPSCQ) adopts an RING-type zinc-finger fold. 18 LRR repeats span residues 184-206 (FLVHLEVDGSRGVTDITGLCRLK), 207-230 (TLEALSLDSCINITKGFDKICALP), 231-251 (QLTSLSLCQTNVTDKDLRCIH), 255-277 (KLKVLRYSSCHEITDLTAIGGMR), 278-301 (SLEKLSLSGCWNVTKGLEELCKFS), 302-324 (NLRELDISGCLVLGSAVVLKNLI), 325-347 (NLKVLSVSNCKNFKDLNGLERLV), 348-370 (NLDKLNLSGCHGVSSLGFVANLS), 371-393 (NLKELDISGCESLVCFDGLQDLN), 394-416 (NLEVLYLRDVKSFTNVGAIKNLS), 417-439 (KMRELDLSGCERITSLSGLETLK), 440-462 (GLEELSLEGCGEIMSFDPIWSLH), 463-485 (HLRVLYVSECGNLEDLSGLEGIT), 486-508 (GLEELYLHGCRKCTNFGPIWNLR), 509-531 (NVCVVELSCCENLEDLSGLQCLT), 532-554 (GLEELYLIGCEEITPIGVVGNLR), 555-577 (NLKCLSTCWCANLKELGGLDRLV), and 578-599 (NLEKLDLSGCCGLSSSVFMELM).

Functionally, may interact with adenylate cyclase to regulate its activity. In terms of biological role, may be involved in the postranscriptional regulation of genes in VSG expression sites. The chain is Putative adenylate cyclase regulatory protein (ESAG8C) from Trypanosoma equiperdum.